We begin with the raw amino-acid sequence, 199 residues long: MTSTPLPRLILGSSSPYRRELLERLRLTFEVAVPDINETPLAGESPEATALRLSLNKAQAIAQRHPDALIIGSDQVLTLDGRQMGKPGSHDKAREQLRLMRGRTATFHSALCLLDGRTGQSQLADVQTRVTMRDLTDAEIDAYLRLEKPYDVAGSAKSEGLGIALLSRVESDDPTALVGLPLIALTSMLRQSGYPFFAA.

The active-site Proton acceptor is D74.

The protein belongs to the Maf family. YceF subfamily. It depends on a divalent metal cation as a cofactor.

The protein localises to the cytoplasm. It catalyses the reaction N(7)-methyl-GTP + H2O = N(7)-methyl-GMP + diphosphate + H(+). Its function is as follows. Nucleoside triphosphate pyrophosphatase that hydrolyzes 7-methyl-GTP (m(7)GTP). May have a dual role in cell division arrest and in preventing the incorporation of modified nucleotides into cellular nucleic acids. The protein is 7-methyl-GTP pyrophosphatase of Cupriavidus pinatubonensis (strain JMP 134 / LMG 1197) (Cupriavidus necator (strain JMP 134)).